Consider the following 776-residue polypeptide: Protein SEY1 (776 aa).

Topologically, residues 1–681 are cytoplasmic; that stretch reads MADRSAIQLI…KRSIITTRTH (681 aa). One can recognise a GB1/RHD3-type G domain in the interval 34 to 263; that stretch reads GLDYHVISVF…TENYYFKPQY (230 aa). GTP is bound at residue 44–51; that stretch reads GSQSSGKS. A helical membrane pass occupies residues 682-702; the sequence is IPPWIYVLLAVLGWNEFVAVI. At 703-705 the chain is on the lumenal side; that stretch reads RNP. Residues 706–726 traverse the membrane as a helical segment; it reads LFVTLTLILGATFFVIHKFGL. Residues 727–776 are Cytoplasmic-facing; that stretch reads WGPVVNVVQSAVGETRTAIKDKLRQFVVEDHEVKESFEMKDFSKNEQKEK.

This sequence belongs to the TRAFAC class dynamin-like GTPase superfamily. GB1/RHD3 GTPase family. RHD3 subfamily. Interacts with RTN1 and YOP1; GTP binding is not required for these interactions.

Its subcellular location is the endoplasmic reticulum membrane. Its function is as follows. Cooperates with the reticulon proteins RTN1 and RTN2 and the tubule-shaping DP1 family protein YOP1 to generate and maintain the structure of the tubular endoplasmic reticulum network. Has GTPase activity, which is required for its function in ER organization. This is Protein SEY1 from Saccharomyces cerevisiae (strain AWRI1631) (Baker's yeast).